The primary structure comprises 1361 residues: MGAAGRQDFLFKAMLTISWLTLTCFPGATSTVAAGCPDQSPELQPWNPGHDQDHHVHIGQGKTLLLTSSATVYSIHISEGGKLVIKDHDEPIVLRTRHILIDNGGELHAGSALCPFQGNFTIILYGRADEGIQPDPYYGLKYIGVGKGGALELHGQKKLSWTFLNKTLHPGGMAEGGYFFERSWGHRGVIVHVIDPKSGTVIHSDRFDTYRSKKESERLVQYLNAVPDGRILSVAVNDEGSRNLDDMARKAMTKLGSKHFLHLGFRHPWSFLTVKGNPSSSVEDHIEYHGHRGSAAARVFKLFQTEHGEYFNVSLSSEWVQDVEWTEWFDHDKVSQTKGGEKISDLWKAHPGKICNRPIDIQATTMDGVNLSTEVVYKKGQDYRFACYDRGRACRSYRVRFLCGKPVRPKLTVTIDTNVNSTILNLEDNVQSWKPGDTLVIASTDYSMYQAEEFQVLPCRSCAPNQVKVAGKPMYLHIGEEIDGVDMRAEVGLLSRNIIVMGEMEDKCYPYRNHICNFFDFDTFGGHIKFALGFKAAHLEGTELKHMGQQLVGQYPIHFHLAGDVDERGGYDPPTYIRDLSIHHTFSRCVTVHGSNGLLIKDVVGYNSLGHCFFTEDGPEERNTFDHCLGLLVKSGTLLPSDRDSKMCKMITEDSYPGYIPKPRQDCNAVSTFWMANPNNNLINCAAAGSEETGFWFIFHHVPTGPSVGMYSPGYSEHIPLGKFYNNRAHSNYRAGMIIDNGVKTTEASAKDKRPFLSIISARYSPHQDADPLKPREPAIIRHFIAYKNQDHGAWLRGGDVWLDSCRFADNGIGLTLASGGTFPYDDGSKQEIKNSLFVGESGNVGTEMMDNRIWGPGGLDHSGRTLPIGQNFPIRGIQLYDGPINIQNCTFRKFVALEGRHTSALAFRLNNAWQSCPHNNVTGIAFEDVPITSRVFFGEPGPWFNQLDMDGDKTSVFHDVDGSVSEYPGSYLTKNDNWLVRHPDCINVPDWRGAICSGCYAQMYIQAYKTSNLRMKIIKNDFPSHPLYLEGALTRSTHYQQYQPVVTLQKGYTIHWDQTAPAELAIWLINFNKGDWIRVGLCYPRGTTFSILSDVHNRLLKQTSKTGVFVRTLQMDKVEQSYPGRSHYYWDEDSGLLFLKLKAQNEREKFAFCSMKGCERIKIKALIPKNAGVSDCTATAYPKFTERAVVDVPMPKKLFGSQLKTKDHFLEVKMESSKQHFFHLWNDFAYIEVDGKKYPSSEDGIQVVVIDGNQGRVVSHTSFRNSILQGIPWQLFNYVATIPDNSIVLMASKGRYVSRGPWTRVLEKLGADRGLKLKEQMAFVGFKGSFRPIWVTLDTEDHKAKIFQVVPIPVVKKKKL.

The N-terminal stretch at 1 to 30 is a signal peptide; the sequence is MGAAGRQDFLFKAMLTISWLTLTCFPGATS. Positions 44–166 constitute a G8 domain; the sequence is QPWNPGHDQD…KKLSWTFLNK (123 aa). Residues Asn119, Asn165, Asn312, Asn370, and Asn420 are each glycosylated (N-linked (GlcNAc...) asparagine). Positions 176–317 constitute a GG-type lectin 1 domain; sequence GGYFFERSWG…GEYFNVSLSS (142 aa). Residues 295 to 591 are necessary for its endoplasmic reticulum (ER) retention and interaction with HSPA5; that stretch reads AAARVFKLFQ…IHHTFSRCVT (297 aa). 4 PbH1 repeats span residues 572-594, 595-617, 719-741, and 798-819; these read DPPT…TVHG, SNGL…FTED, IPLG…IIDN, and GGDV…TLAS. N-linked (GlcNAc...) asparagine glycosylation is found at Asn889 and Asn921. Residues 1227–1361 enclose the GG-type lectin 2 domain; the sequence is NDFAYIEVDG…PIPVVKKKKL (135 aa).

Belongs to the CEMIP family. As to quaternary structure, interacts with EPHA2 and ITPR3. Interacts with HSPA5/BIP; the interaction induces calcium leakage from the endoplasmic reticulum and cell migration. Interacts with clathrin heavy chain/CLTC. Post-translationally, N-glycosylated; glycosylation is not necessary for HA-binding. Expressed in dermal and in synovial fibroblasts. Strongly expressed in gastric cancers compared with the paired normal tissues. Strongly expressed in both ductal carcinoma and invasive breast cancer cells compared with benign epithelial cells (at protein level). Strongly expressed in brain, placenta, prostate, breast, lung and testis. Expressed in fibroblasts, epithelial cells and cancer cells. In ear, it is specifically expressed in inner ear. Expressed in cochlea and vestibule tissues. Strongly expressed in gastric cancers compared with the paired normal tissues. Strongly expressed in colon adenocarcinomas compared with normal colonic mucosas. Strongly expressed in breast cancer as compared to normal breast tissue.

It localises to the nucleus. The protein resides in the cytoplasm. It is found in the endoplasmic reticulum. Its subcellular location is the cell membrane. The protein localises to the membrane. It localises to the clathrin-coated pit. The protein resides in the secreted. The enzyme catalyses Random hydrolysis of (1-&gt;4)-linkages between N-acetyl-beta-D-glucosamine and D-glucuronate residues in hyaluronate.. With respect to regulation, activity is up-regulated by histamine. In terms of biological role, mediates depolymerization of hyaluronic acid (HA) via the cell membrane-associated clathrin-coated pit endocytic pathway. Binds to hyaluronic acid. Hydrolyzes high molecular weight hyaluronic acid to produce an intermediate-sized product, a process that may occur through rapid vesicle endocytosis and recycling without intracytoplasmic accumulation or digestion in lysosomes. Involved in hyaluronan catabolism in the dermis of the skin and arthritic synovium. Positively regulates epithelial-mesenchymal transition (EMT), and hence tumor cell growth, invasion and cancer dissemination. In collaboration with HSPA5/BIP, promotes cancer cell migration in a calcium and PKC-dependent manner. May be involved in hearing. The polypeptide is Cell migration-inducing and hyaluronan-binding protein (Homo sapiens (Human)).